The primary structure comprises 91 residues: Non-specific lipid-transfer protein P5 (91 aa).

Intrachain disulfides connect Cys3-Cys50, Cys13-Cys27, Cys28-Cys73, and Cys48-Cys87.

Its subcellular location is the secreted. Its function is as follows. Plant non-specific lipid-transfer proteins transfer phospholipids as well as galactolipids across membranes. May play a role in wax or cutin deposition in the cell walls of expanding epidermal cells and certain secretory tissues. This is Non-specific lipid-transfer protein P5 from Vitis sp. (Grape).